The chain runs to 235 residues: Glucosamine-6-phosphate deaminase (235 aa).

Aspartate 62 serves as the catalytic Proton acceptor; for enolization step. Asparagine 128 serves as the catalytic For ring-opening step. Histidine 130 acts as the Proton acceptor; for ring-opening step in catalysis. The active-site For ring-opening step is glutamate 135.

Belongs to the glucosamine/galactosamine-6-phosphate isomerase family. NagB subfamily.

It catalyses the reaction alpha-D-glucosamine 6-phosphate + H2O = beta-D-fructose 6-phosphate + NH4(+). The protein operates within amino-sugar metabolism; N-acetylneuraminate degradation; D-fructose 6-phosphate from N-acetylneuraminate: step 5/5. Catalyzes the reversible isomerization-deamination of glucosamine 6-phosphate (GlcN6P) to form fructose 6-phosphate (Fru6P) and ammonium ion. This is Glucosamine-6-phosphate deaminase from Lactococcus lactis subsp. lactis (strain IL1403) (Streptococcus lactis).